Consider the following 60-residue polypeptide: Large ribosomal subunit protein uL30 (60 aa).

This sequence belongs to the universal ribosomal protein uL30 family. Part of the 50S ribosomal subunit.

The sequence is that of Large ribosomal subunit protein uL30 from Moorella thermoacetica (strain ATCC 39073 / JCM 9320).